A 332-amino-acid polypeptide reads, in one-letter code: Transaldolase (332 aa).

Residue Lys-136 is the Schiff-base intermediate with substrate of the active site.

Belongs to the transaldolase family. Type 1 subfamily.

It is found in the cytoplasm. The enzyme catalyses D-sedoheptulose 7-phosphate + D-glyceraldehyde 3-phosphate = D-erythrose 4-phosphate + beta-D-fructose 6-phosphate. It functions in the pathway carbohydrate degradation; pentose phosphate pathway; D-glyceraldehyde 3-phosphate and beta-D-fructose 6-phosphate from D-ribose 5-phosphate and D-xylulose 5-phosphate (non-oxidative stage): step 2/3. Transaldolase is important for the balance of metabolites in the pentose-phosphate pathway. The chain is Transaldolase from Nostoc sp. (strain PCC 7120 / SAG 25.82 / UTEX 2576).